Consider the following 259-residue polypeptide: uncharacterized protein (259 aa).

It belongs to the chlamydial CPn_0128/CT_035/TC_0305 family.

This is an uncharacterized protein from Chlamydia muridarum (strain MoPn / Nigg).